A 1122-amino-acid polypeptide reads, in one-letter code: Histone deacetylase 5 (1122 aa).

Residues methionine 1 to arginine 22 form a disordered region. Residue lysine 35 forms a Glycyl lysine isopeptide (Lys-Gly) (interchain with G-Cter in SUMO2) linkage. A disordered region spans residues lysine 196–leucine 281. Residues aspartate 247 to alanine 258 show a composition bias toward basic and acidic residues. The residue at position 259 (serine 259) is a Phosphoserine; by AMPK, CaMK1, SIK1 and PKD/PRKD1. Positions lysine 272 to leucine 281 are enriched in basic and acidic residues. Threonine 292 is subject to Phosphothreonine; by PKC. 2 disordered regions span residues glycine 302–threonine 343 and methionine 481–serine 504. Over residues asparagine 312–serine 327 the composition is skewed to low complexity. A compositionally biased stretch (polar residues) spans threonine 328 to asparagine 340. Positions serine 494 to serine 504 are enriched in low complexity. Serine 498 carries the phosphoserine; by AMPK, CaMK1, SIK1 and PKD/PRKD1 modification. Lysine 533 bears the N6-acetyllysine mark. The segment at threonine 536–glycine 625 is disordered. Positions serine 581–glutamate 621 are enriched in acidic residues. Phosphoserine is present on residues serine 611 and serine 661. The interval glycine 684–glutamine 1028 is histone deacetylase. Residues cysteine 696, cysteine 698, histidine 704, and cysteine 781 each contribute to the Zn(2+) site. Histidine 833 is a catalytic residue. Positions glutamate 1081–leucine 1122 match the Nuclear export signal motif. Positions glutamate 1097 to leucine 1122 are disordered. The span at alanine 1104–glutamate 1113 shows a compositional bias: basic and acidic residues. Serine 1108 carries the phosphoserine modification.

Belongs to the histone deacetylase family. HD type 2 subfamily. In terms of assembly, interacts with AHRR, BAHD1, BCOR, HDAC7, HDAC9, CTBP1, MEF2C, NCOR2, NRIP1, PHB2 and a 14-3-3 chaperone protein. Interacts with BCL6, DDIT3/CHOP, GRK5, KDM5B and MYOCD. Interacts with EP300 in the presence of TFAP2C. Interacts with ANKRA2. Interacts with CUL7 (as part of the 3M complex); negatively regulated by ANKRA2. Interacts with ZBTB7B; the interaction allows the recruitment of HDAC4 on CD8 loci for deacetylation and possible inhibition of CD8 genes expression. Interacts with RARA. In terms of processing, phosphorylated by AMPK, CaMK1, SIK1 and PRKD1 at Ser-259 and Ser-498. The phosphorylation is required for the export to the cytoplasm and inhibition. Phosphorylated by the PKC kinases PKN1 and PKN2, impairing nuclear import. Phosphorylated by GRK5, leading to nuclear export of HDAC5 and allowing MEF2-mediated transcription. Ubiquitinated. Polyubiquitination however does not lead to its degradation.

The protein resides in the nucleus. Its subcellular location is the cytoplasm. It catalyses the reaction N(6)-acetyl-L-lysyl-[histone] + H2O = L-lysyl-[histone] + acetate. Functionally, responsible for the deacetylation of lysine residues on the N-terminal part of the core histones (H2A, H2B, H3 and H4). Histone deacetylation gives a tag for epigenetic repression and plays an important role in transcriptional regulation, cell cycle progression and developmental events. Histone deacetylases act via the formation of large multiprotein complexes. Involved in muscle maturation by repressing transcription of myocyte enhancer MEF2C. During muscle differentiation, it shuttles into the cytoplasm, allowing the expression of myocyte enhancer factors. Serves as a corepressor of RARA and causes its deacetylation. In association with RARA, plays a role in the repression of microRNA-10a and thereby in the inflammatory response. In Pongo abelii (Sumatran orangutan), this protein is Histone deacetylase 5 (HDAC5).